Here is a 138-residue protein sequence, read N- to C-terminus: Ribosomal RNA large subunit methyltransferase H (138 aa).

Residues Gly-86 and 105 to 110 (LSPLTF) contribute to the S-adenosyl-L-methionine site.

The protein belongs to the RNA methyltransferase RlmH family. Homodimer.

It localises to the cytoplasm. The catalysed reaction is pseudouridine(1915) in 23S rRNA + S-adenosyl-L-methionine = N(3)-methylpseudouridine(1915) in 23S rRNA + S-adenosyl-L-homocysteine + H(+). In terms of biological role, specifically methylates the pseudouridine at position 1915 (m3Psi1915) in 23S rRNA. This Prochlorococcus marinus (strain MIT 9215) protein is Ribosomal RNA large subunit methyltransferase H.